The primary structure comprises 209 residues: Small ribosomal subunit protein uS4 (209 aa).

The S4 RNA-binding domain occupies 99 to 162 (RRLDNMVYRL…RKNNKIIEAM (64 aa)).

This sequence belongs to the universal ribosomal protein uS4 family. In terms of assembly, part of the 30S ribosomal subunit. Contacts protein S5. The interaction surface between S4 and S5 is involved in control of translational fidelity.

In terms of biological role, one of the primary rRNA binding proteins, it binds directly to 16S rRNA where it nucleates assembly of the body of the 30S subunit. Its function is as follows. With S5 and S12 plays an important role in translational accuracy. The protein is Small ribosomal subunit protein uS4 of Syntrophus aciditrophicus (strain SB).